A 264-amino-acid polypeptide reads, in one-letter code: 3'-5' ssDNA/RNA exonuclease TatD (264 aa).

A divalent metal cation contacts are provided by glutamate 92, histidine 128, and histidine 153.

The protein belongs to the metallo-dependent hydrolases superfamily. TatD-type hydrolase family. TatD subfamily. In terms of assembly, monomer. Requires Mg(2+) as cofactor.

The protein resides in the cytoplasm. Its function is as follows. 3'-5' exonuclease that prefers single-stranded DNA and RNA. May play a role in the H(2)O(2)-induced DNA damage repair. In Musicola paradisiaca (strain Ech703) (Dickeya paradisiaca), this protein is 3'-5' ssDNA/RNA exonuclease TatD.